Reading from the N-terminus, the 461-residue chain is Photosystem II CP43 reaction center protein (461 aa).

A propeptide spanning residues 1 to 2 is cleaved from the precursor; it reads ME. Position 3 is an N-acetylthreonine (Thr3). Phosphothreonine is present on Thr3. The next 5 membrane-spanning stretches (helical) occupy residues 57 to 81, 122 to 143, 166 to 188, 243 to 263, and 279 to 300; these read LFEV…PHIA, LIGP…KDKN, KAMY…RIIT, TPWP…LSYS, and WFNN…ASQA. Glu355 lines the [CaMn4O5] cluster pocket. The chain crosses the membrane as a helical span at residues 435 to 459; sequence RARAAAAGFEKGIDRVDEPVLSMRP.

It belongs to the PsbB/PsbC family. PsbC subfamily. As to quaternary structure, PSII is composed of 1 copy each of membrane proteins PsbA, PsbB, PsbC, PsbD, PsbE, PsbF, PsbH, PsbI, PsbJ, PsbK, PsbL, PsbM, PsbT, PsbX, PsbY, PsbZ, Psb30/Ycf12, at least 3 peripheral proteins of the oxygen-evolving complex and a large number of cofactors. It forms dimeric complexes. Requires Binds multiple chlorophylls and provides some of the ligands for the Ca-4Mn-5O cluster of the oxygen-evolving complex. It may also provide a ligand for a Cl- that is required for oxygen evolution. PSII binds additional chlorophylls, carotenoids and specific lipids. as cofactor.

It localises to the plastid. The protein resides in the chloroplast thylakoid membrane. One of the components of the core complex of photosystem II (PSII). It binds chlorophyll and helps catalyze the primary light-induced photochemical processes of PSII. PSII is a light-driven water:plastoquinone oxidoreductase, using light energy to abstract electrons from H(2)O, generating O(2) and a proton gradient subsequently used for ATP formation. This Chlamydomonas moewusii (Chlamydomonas eugametos) protein is Photosystem II CP43 reaction center protein.